Consider the following 362-residue polypeptide: Porin Omp2b (362 aa).

A signal peptide spans 1 to 22 (MNIKSLLLGSAAALVAASGAQA).

The protein belongs to the alphaproteobacteria porin family. As to quaternary structure, homotrimer.

The protein resides in the cell outer membrane. Its function is as follows. Forms passive diffusion pores that allow small molecular weight hydrophilic materials across the outer membrane. The polypeptide is Porin Omp2b (omp2b) (Brucella neotomae).